We begin with the raw amino-acid sequence, 50 residues long: Sperm protamine P1 (50 aa).

It belongs to the protamine P1 family. Cross-linked by interchain disulfide bonds around the DNA-helix. Testis.

The protein localises to the nucleus. It localises to the chromosome. Protamines substitute for histones in the chromatin of sperm during the haploid phase of spermatogenesis. They compact sperm DNA into a highly condensed, stable and inactive complex. In Saimiri sciureus (Common squirrel monkey), this protein is Sperm protamine P1 (PRM1).